Reading from the N-terminus, the 256-residue chain is MGKPIQKTDGSTPQRPLICAPLVGKTKAALIEEIDAVAAKKPDLLEWRVDFYKHIGKTEDVLETASLLKAHSKGIPILFTRRSIREGGEPITVSEQEVTALYEQVMKLGLVDVVDVELSCPEAEKERLRAIAKETETQWILSYHDFQRTPSEADILAKLQEAEANGADVGKVAVMPETMADVLTLMQATQKAASTLTIPVITMAMGRLGTLSRMAGGACGSALTFAIANESSAPGQMPIDELRSVLDVIDRYVTGQ.

3-dehydroquinate contacts are provided by residues 46 to 48 (EWR) and arginine 82. Histidine 144 functions as the Proton donor/acceptor in the catalytic mechanism. The active-site Schiff-base intermediate with substrate is lysine 171. 3 residues coordinate 3-dehydroquinate: arginine 213, serine 232, and glutamine 236.

Belongs to the type-I 3-dehydroquinase family. Homodimer.

It carries out the reaction 3-dehydroquinate = 3-dehydroshikimate + H2O. Its pathway is metabolic intermediate biosynthesis; chorismate biosynthesis; chorismate from D-erythrose 4-phosphate and phosphoenolpyruvate: step 3/7. Functionally, involved in the third step of the chorismate pathway, which leads to the biosynthesis of aromatic amino acids. Catalyzes the cis-dehydration of 3-dehydroquinate (DHQ) and introduces the first double bond of the aromatic ring to yield 3-dehydroshikimate. The polypeptide is 3-dehydroquinate dehydratase (Shouchella clausii (strain KSM-K16) (Alkalihalobacillus clausii)).